Reading from the N-terminus, the 196-residue chain is 7-methyl-GTP pyrophosphatase (196 aa).

The Proton acceptor role is filled by aspartate 72.

It belongs to the Maf family. YceF subfamily. A divalent metal cation is required as a cofactor.

Its subcellular location is the cytoplasm. The enzyme catalyses N(7)-methyl-GTP + H2O = N(7)-methyl-GMP + diphosphate + H(+). Functionally, nucleoside triphosphate pyrophosphatase that hydrolyzes 7-methyl-GTP (m(7)GTP). May have a dual role in cell division arrest and in preventing the incorporation of modified nucleotides into cellular nucleic acids. This Neisseria meningitidis serogroup B (strain ATCC BAA-335 / MC58) protein is 7-methyl-GTP pyrophosphatase.